A 155-amino-acid polypeptide reads, in one-letter code: Small ribosomal subunit protein uS7c (155 aa).

It belongs to the universal ribosomal protein uS7 family. As to quaternary structure, part of the 30S ribosomal subunit.

Its subcellular location is the plastid. The protein resides in the chloroplast. In terms of biological role, one of the primary rRNA binding proteins, it binds directly to 16S rRNA where it nucleates assembly of the head domain of the 30S subunit. This Beta vulgaris (Sugar beet) protein is Small ribosomal subunit protein uS7c.